Consider the following 133-residue polypeptide: U-scoloptoxin(05)-Sa1a (133 aa).

An N-terminal signal peptide occupies residues 1–24 (MPSLCIIALFGTLTFYTLIPSIHT).

It belongs to the scoloptoxin-05 family. Contains 5 disulfide bonds. Expressed by the venom gland.

The protein localises to the secreted. This chain is U-scoloptoxin(05)-Sa1a, found in Scolopendra alternans (Florida Keys giant centipede).